The following is a 587-amino-acid chain: MVLSRRFAQVSSDEEDDVPITRSKGRNSASPEESLGKRRKRKTVKLYEDFEEKEADRKKKRKGNKEDEDMAEGDDDQAEEETNPEAEEEEDEEEEEKPDDACPVGDSVNVTGKGKGKRTHFNQFAYDGNTYDLEVPVLLVPEDKSQKPYVAIIKDITQTKDGSMMILGQWFYRPEEAEKRGGGNWQSSDTRELFYSFHRDEVPAESVMHRCVVYFVPAHKQLPKRKNNPGFIVRKVYDTVEKKLWKLTDKDYEDSKQREIDVLVKKTMNVLGDLPDLESEDMLVDQENVLKAKRSFRKVNISPVDVRREEDASLKAETPGSGAGISSEHYAILEKFDSLTGDAHRDKCLGKLLEAVQHICYIPENKQAGDEAKVGSDASHLEQDEKDTKPENGKDEKFLWPDAAVPQVCALENASHASLASDFQKYNQKMRTLVFNLKNTALLARRLLNGELEPATILNMSPTELKEGLTADETTKKEPDDADRMQMTSVRCSRCSQLTVGLRDIIQAGHGDRYQLECVDCGYSWYASRDEVSTLTIVTDKPAQGTEKEDIEKNLTSPRETNKPKDEALKTNDSNADNNPEASKKPE.

Residues 1–118 (MVLSRRFAQV…NVTGKGKGKR (118 aa)) form a disordered region. The span at 66 to 98 (EDEDMAEGDDDQAEEETNPEAEEEEDEEEEEKP) shows a compositional bias: acidic residues. The BAH domain occupies 129-248 (NTYDLEVPVL…TVEKKLWKLT (120 aa)). Residues 344 to 493 (HRDKCLGKLL…RMQMTSVRCS (150 aa)) form the TFIIS central domain. 2 disordered regions span residues 371-396 (EAKVGSDASHLEQDEKDTKPENGKDE) and 539-587 (TDKP…KKPE). A compositionally biased stretch (basic and acidic residues) spans 560–570 (ETNKPKDEALK). The segment covering 571 to 581 (TNDSNADNNPE) has biased composition (polar residues).

In terms of assembly, interacts with MOM1. Component of the ASI1-AIPP1-EDM2 (AAE) RNA regulatory complex composed of at least AIPP1/EDM3, ASI1 and EDM2 and may contain CPL2, AIPP2 and AIPP3/BDT1. Part of the BAH-PHD bivalent histone reader complex that contains AIPP2, PAIPP2 and AIPP3/BDT1; the BAH-PHD module associates with CPL2 to form the BAH-PHD-CPL2 complex (BPC) for transcriptional repression. Binds directly to CPL2, PHD1, PAIPP2/PHD2, AIPP2/PHD3, PHD4, PHD5 and PHD6. In terms of tissue distribution, expressed ubiquitously.

The protein resides in the nucleus. Functionally, transcriptional repressor. Together with PHD finger-containing proteins (e.g. PHD1, PAIPP2/PHD2, AIPP2/PHD3, PHD4, PHD5 and PHD6), cooperates to form a BAH-PHD bivalent histone reader complex able to read histone H3 lysine 27 trimethylation (H3K27me3) and low-methylated H3K4 histone marks in order to regulate transcription, especially to prevent early flowering; H3K27me3 reader of this complex. CPL2 is subsequently recruited to form a BAH-PHD-CPL2 complex (BPC) in order to silence several H3K27me3 and low-methylated H3K4 enriched loci, including AGO5, via the phosphorylation state-dependent inhibition of Pol II release from the transcriptional start site (e.g. Ser5P-Pol II dephosphorylation). The BPC complex represses flowering by inhibiting the expression of several genes, including AGL6, FT, FUL and SOC1. Prevents the accumulation of intronic heterochromatin-containing genes (e.g. IBM1, At3g05410 and RPP7). Seems to not be involved in vernalization establishment, by contrast to orthologs in grass plants. The sequence is that of ASI1-immunoprecipitated protein 3 from Arabidopsis thaliana (Mouse-ear cress).